A 231-amino-acid chain; its full sequence is Phosphatidylserine decarboxylase proenzyme (231 aa).

Serine 188 acts as the Schiff-base intermediate with substrate; via pyruvic acid in catalysis. The residue at position 188 (serine 188) is a Pyruvic acid (Ser); by autocatalysis.

The protein belongs to the phosphatidylserine decarboxylase family. PSD-A subfamily. As to quaternary structure, heterodimer of a large membrane-associated beta subunit and a small pyruvoyl-containing alpha subunit. Pyruvate is required as a cofactor. Post-translationally, is synthesized initially as an inactive proenzyme. Formation of the active enzyme involves a self-maturation process in which the active site pyruvoyl group is generated from an internal serine residue via an autocatalytic post-translational modification. Two non-identical subunits are generated from the proenzyme in this reaction, and the pyruvate is formed at the N-terminus of the alpha chain, which is derived from the carboxyl end of the proenzyme. The post-translation cleavage follows an unusual pathway, termed non-hydrolytic serinolysis, in which the side chain hydroxyl group of the serine supplies its oxygen atom to form the C-terminus of the beta chain, while the remainder of the serine residue undergoes an oxidative deamination to produce ammonia and the pyruvoyl prosthetic group on the alpha chain.

Its subcellular location is the cell membrane. The enzyme catalyses a 1,2-diacyl-sn-glycero-3-phospho-L-serine + H(+) = a 1,2-diacyl-sn-glycero-3-phosphoethanolamine + CO2. The protein operates within phospholipid metabolism; phosphatidylethanolamine biosynthesis; phosphatidylethanolamine from CDP-diacylglycerol: step 2/2. In terms of biological role, catalyzes the formation of phosphatidylethanolamine (PtdEtn) from phosphatidylserine (PtdSer). This Rickettsia akari (strain Hartford) protein is Phosphatidylserine decarboxylase proenzyme.